The sequence spans 202 residues: MKVLVTGFEPFNGETINPSFEAIKMLPDEVEGAKIIKAKLPTVFRKSLCELEELISKENPDIVICVGQAAGRSKISIERVAINIDDAEINDNEGNKPKDEKIFVDGENAYFSNLPIKLMVKTIKEHNIPAEISNSAGTYVCNHVFYGLMYLIDKKFKNLKGGFIHVPFSHNQVLEKKNVPSMSLEDITNGLFYAIKGVLSEK.

Catalysis depends on residues Glu-78, Cys-141, and His-165.

Belongs to the peptidase C15 family. In terms of assembly, homotetramer.

The protein localises to the cytoplasm. It carries out the reaction Release of an N-terminal pyroglutamyl group from a polypeptide, the second amino acid generally not being Pro.. Removes 5-oxoproline from various penultimate amino acid residues except L-proline. The polypeptide is Pyrrolidone-carboxylate peptidase (Thermosipho melanesiensis (strain DSM 12029 / CIP 104789 / BI429)).